Here is a 553-residue protein sequence, read N- to C-terminus: Transcriptional regulator HilA (553 aa).

Residues 11–107 constitute a DNA-binding region (ompR/PhoB-type); that stretch reads NKKFVFDDFI…LYGQGYRFNR (97 aa). Position 62 is a 4-aspartylphosphate (D62). One copy of the TPR repeat lies at 372–405; it reads ADIKYYYGWNLFMAGQLEEALQTINECLKLDPTR.

Functionally, the main transcriptional regulator of the Salmonella pathogenicity island 1 (SPI1) gene expression. Activates the expression of invasion genes by a direct action at their promoters and also indirectly by increasing the level of invF. Also binds upstream of prgH and directly activates the expression of prgHIJK operon. The protein is Transcriptional regulator HilA (hilA) of Salmonella typhi.